We begin with the raw amino-acid sequence, 89 residues long: Small ribosomal subunit protein uS15 (89 aa).

The protein belongs to the universal ribosomal protein uS15 family. Part of the 30S ribosomal subunit. Forms a bridge to the 50S subunit in the 70S ribosome, contacting the 23S rRNA.

One of the primary rRNA binding proteins, it binds directly to 16S rRNA where it helps nucleate assembly of the platform of the 30S subunit by binding and bridging several RNA helices of the 16S rRNA. Functionally, forms an intersubunit bridge (bridge B4) with the 23S rRNA of the 50S subunit in the ribosome. The sequence is that of Small ribosomal subunit protein uS15 from Leuconostoc mesenteroides subsp. mesenteroides (strain ATCC 8293 / DSM 20343 / BCRC 11652 / CCM 1803 / JCM 6124 / NCDO 523 / NBRC 100496 / NCIMB 8023 / NCTC 12954 / NRRL B-1118 / 37Y).